A 647-amino-acid polypeptide reads, in one-letter code: DNA mismatch repair protein MutL (647 aa).

This sequence belongs to the DNA mismatch repair MutL/HexB family.

In terms of biological role, this protein is involved in the repair of mismatches in DNA. It is required for dam-dependent methyl-directed DNA mismatch repair. May act as a 'molecular matchmaker', a protein that promotes the formation of a stable complex between two or more DNA-binding proteins in an ATP-dependent manner without itself being part of a final effector complex. The sequence is that of DNA mismatch repair protein MutL from Bacillus cereus (strain G9842).